A 136-amino-acid polypeptide reads, in one-letter code: Keratin-associated protein 9-3 (136 aa).

11 consecutive repeat copies span residues Cys-3–Ser-7, Cys-21–Thr-25, Cys-31–Ser-35, Cys-36–Ser-40, Cys-41–Ser-45, Cys-46–Gly-50, Cys-87–Ser-91, Cys-97–His-101, Cys-107–Ser-111, Cys-117–Ala-121, and Cys-126–Ser-130. The interval Cys-21–Ser-130 is 11 X 5 AA repeats of C-C-[AEQVR]-[ALPTV]-[AGHST].

It belongs to the KRTAP type 9 family. As to quaternary structure, interacts with hair keratins.

In terms of biological role, in the hair cortex, hair keratin intermediate filaments are embedded in an interfilamentous matrix, consisting of hair keratin-associated proteins (KRTAP), which are essential for the formation of a rigid and resistant hair shaft through their extensive disulfide bond cross-linking with abundant cysteine residues of hair keratins. The matrix proteins include the high-sulfur and high-glycine-tyrosine keratins. This is Keratin-associated protein 9-3 from Mus musculus (Mouse).